The chain runs to 231 residues: ATP phosphoribosyltransferase (231 aa).

This sequence belongs to the ATP phosphoribosyltransferase family. Short subfamily. As to quaternary structure, heteromultimer composed of HisG and HisZ subunits.

It is found in the cytoplasm. It catalyses the reaction 1-(5-phospho-beta-D-ribosyl)-ATP + diphosphate = 5-phospho-alpha-D-ribose 1-diphosphate + ATP. Its pathway is amino-acid biosynthesis; L-histidine biosynthesis; L-histidine from 5-phospho-alpha-D-ribose 1-diphosphate: step 1/9. Its function is as follows. Catalyzes the condensation of ATP and 5-phosphoribose 1-diphosphate to form N'-(5'-phosphoribosyl)-ATP (PR-ATP). Has a crucial role in the pathway because the rate of histidine biosynthesis seems to be controlled primarily by regulation of HisG enzymatic activity. The polypeptide is ATP phosphoribosyltransferase (Brucella anthropi (strain ATCC 49188 / DSM 6882 / CCUG 24695 / JCM 21032 / LMG 3331 / NBRC 15819 / NCTC 12168 / Alc 37) (Ochrobactrum anthropi)).